We begin with the raw amino-acid sequence, 357 residues long: tRNA-specific 2-thiouridylase MnmA (357 aa).

ATP contacts are provided by residues 3 to 10 (AMSGGVDS) and Leu29. Cys98 acts as the Nucleophile in catalysis. Cys98 and Cys196 are oxidised to a cystine. Gly122 lines the ATP pocket. An interaction with tRNA region spans residues 146–148 (KDQ). The active-site Cysteine persulfide intermediate is Cys196. The segment at 302-303 (RY) is interaction with tRNA.

This sequence belongs to the MnmA/TRMU family.

The protein localises to the cytoplasm. The catalysed reaction is S-sulfanyl-L-cysteinyl-[protein] + uridine(34) in tRNA + AH2 + ATP = 2-thiouridine(34) in tRNA + L-cysteinyl-[protein] + A + AMP + diphosphate + H(+). Catalyzes the 2-thiolation of uridine at the wobble position (U34) of tRNA, leading to the formation of s(2)U34. The sequence is that of tRNA-specific 2-thiouridylase MnmA from Moorella thermoacetica (strain ATCC 39073 / JCM 9320).